A 36-amino-acid polypeptide reads, in one-letter code: Pancreatic polypeptide (36 aa).

Tyrosine amide is present on Tyr-36.

Belongs to the NPY family.

Its subcellular location is the secreted. Functionally, hormone secreted by pancreatic cells that acts as a regulator of pancreatic and gastrointestinal functions probably by signaling through the G protein-coupled receptor NPY4R2. This Macaca mulatta (Rhesus macaque) protein is Pancreatic polypeptide (PPY).